The primary structure comprises 538 residues: Mitochondria-eating protein (538 aa).

The segment at 1-273 is interaction with YWHAG/14-3-3 protein gamma; the sequence is MAENLKRLVS…PRSRSCSRSR (273 aa). The residue at position 85 (Ser-85) is a Phosphoserine. Residues 97–137 are disordered; the sequence is SKVPSLQDTFDRERHKDPSPRDRDMQQLDSNLNSTRSQCNQ. A compositionally biased stretch (basic and acidic residues) spans 105 to 122; sequence TFDRERHKDPSPRDRDMQ. Coiled-coil stretches lie at residues 118-187 and 219-256; these read DRDM…RHRN and DQQD…RSSR. Residues 123-137 are compositionally biased toward polar residues; the sequence is QLDSNLNSTRSQCNQ. Ser-156 and Ser-159 each carry phosphoserine. 2 disordered regions span residues 173–226 and 247–294; these read QLKS…TEAM and KSAL…SKLS. Positions 181–210 are enriched in basic and acidic residues; sequence EDARHRNTDQRSSENRRSEPWSLEERKREQ. The segment covering 211–224 has biased composition (polar residues); it reads WNSLKQNADQQDTE. The segment covering 253-278 has biased composition (low complexity); sequence RSSRSRSPSPAPRSRSCSRSRSASPS. 2 positions are modified to phosphoserine: Ser-287 and Ser-509.

The protein belongs to the MIEAP family. In terms of assembly, interacts (via coiled-coil domains) with BNIP3L (via BH3 domain). Interacts (via coiled-coil domains) with BNIP3 (via BH3 domain). As to quaternary structure, interacts with YWHAG/14-3-3 protein gamma; a protein that also plays a role in MALM.

The protein localises to the cytoplasm. It localises to the cytosol. The protein resides in the mitochondrion outer membrane. It is found in the mitochondrion matrix. Key regulator of mitochondrial quality that mediates the repairing or degradation of unhealthy mitochondria in response to mitochondrial damage. Mediator of mitochondrial protein catabolic process (also named MALM) by mediating the degradation of damaged proteins inside mitochondria by promoting the accumulation in the mitochondrial matrix of hydrolases that are characteristic of the lysosomal lumen. Also involved in mitochondrion degradation of damaged mitochondria by promoting the formation of vacuole-like structures (named MIV), which engulf and degrade unhealthy mitochondria by accumulating lysosomes. The physical interaction of SPATA18/MIEAP, BNIP3 and BNIP3L/NIX at the mitochondrial outer membrane regulates the opening of a pore in the mitochondrial double membrane in order to mediate the translocation of lysosomal proteins from the cytoplasm to the mitochondrial matrix. Binds cardiolipin. May form molecular condensates (non-membrane-bounded organelles) within mitochondria that compartmentalize and promote cardiolipin metabolism. The protein is Mitochondria-eating protein (SPATA18) of Homo sapiens (Human).